Consider the following 709-residue polypeptide: Ral guanine nucleotide dissociation stimulator-like 3 (709 aa).

The segment at 26–55 is disordered; it reads VYSVSLRRQRSQRSTPERSGEGQTPIPATD. Residues 64–201 form the N-terminal Ras-GEF domain; that stretch reads KVRALRAARL…LLEDFLKEAK (138 aa). Disordered stretches follow at residues 203–225, 395–416, and 502–604; these read EQTEEEKRLAWSGPPRIAQTPGS, SQEETTEDDDCPSGSLPSKLPP, and PPAA…SRVP. A Ras-GEF domain is found at 248–503; it reads SVDDVAEQLT…YRVSRVIEPP (256 aa). Composition is skewed to low complexity over residues 502-511 and 533-551; these read PPAASCPSSP and SSPGGSPGDPSSPTSSVSP. Residues S506 and S510 each carry the phosphoserine modification. Residues 552–576 show a composition bias toward pro residues; it reads GSPPSSPRNREPPPPGSPPASPGPQ. Phosphoserine is present on residues S553, S568, S572, S577, and S600. Residues 611-706 form an interaction with HRAS, MRAS and RIT1 region; sequence SEARVIRVSI…KEGTGHTLSA (96 aa). One can recognise a Ras-associating domain in the interval 612 to 699; the sequence is EARVIRVSIN…GDFLLRRKEG (88 aa).

In terms of assembly, interacts with GTP-bound forms of RIT1, HRAS and MRAS. As to expression, widely expressed. Expressed at high levels in the liver and kidney.

Guanine nucleotide exchange factor (GEF) for Ral-A. Potential effector of GTPase HRas and Ras-related protein M-Ras. Negatively regulates Elk-1-dependent gene induction downstream of HRas and MEKK1. In Mus musculus (Mouse), this protein is Ral guanine nucleotide dissociation stimulator-like 3 (Rgl3).